Here is a 430-residue protein sequence, read N- to C-terminus: GTPase Obg (430 aa).

Residues 1-158 form the Obg domain; the sequence is MFVDQVKISL…LEVTLELKLL (158 aa). A disordered region spans residues 118–145; the sequence is RGGRGGRGNSRFATPRNPAPDFSENGEP. An OBG-type G domain is found at 159–329; the sequence is ADVGLVGFPS…LLYQIADKLE (171 aa). GTP is bound by residues 165–172, 190–194, 212–215, 282–285, and 310–312; these read GFPSVGKS, FTTIK, DLPG, NKMD, and STI. Mg(2+)-binding residues include Ser-172 and Thr-192. Residues 352–430 form the OCT domain; sequence KHTPSADKFT…ILGGEFEFVE (79 aa).

The protein belongs to the TRAFAC class OBG-HflX-like GTPase superfamily. OBG GTPase family. Monomer. The cofactor is Mg(2+).

Its subcellular location is the cytoplasm. Its function is as follows. An essential GTPase which binds GTP, GDP and possibly (p)ppGpp with moderate affinity, with high nucleotide exchange rates and a fairly low GTP hydrolysis rate. Plays a role in control of the cell cycle, stress response, ribosome biogenesis and in those bacteria that undergo differentiation, in morphogenesis control. This is GTPase Obg from Staphylococcus epidermidis (strain ATCC 35984 / DSM 28319 / BCRC 17069 / CCUG 31568 / BM 3577 / RP62A).